Reading from the N-terminus, the 490-residue chain is Colicin-10 (490 aa).

Residues Met-1–Ser-20 are compositionally biased toward polar residues. Disordered regions lie at residues Met-1–Gly-29 and Gln-146–Arg-171. The segment covering Gln-146 to Ala-170 has biased composition (basic and acidic residues). A helical transmembrane segment spans residues Ile-447–Ile-467.

The protein belongs to the channel forming colicin family.

Its subcellular location is the host membrane. In terms of biological role, this colicin is a channel-forming colicin. This class of transmembrane toxins depolarize the cytoplasmic membrane, leading to dissipation of cellular energy. Its function is as follows. Colicins are polypeptide toxins produced by and active against E.coli and closely related bacteria. This Escherichia coli protein is Colicin-10 (cta).